Consider the following 284-residue polypeptide: GPN-loop GTPase 3 (284 aa).

Residue Gly13–Thr18 participates in GTP binding. Residues Gly72 to Asn74 carry the Gly-Pro-Asn (GPN)-loop; involved in dimer interface motif. Thr174–Asp177 lines the GTP pocket.

The protein belongs to the GPN-loop GTPase family. Heterodimer with GPN1. Binds to RNA polymerase II (RNAPII). Interacts directly with subunits RPB4 and RPB7 and the CTD of RPB1.

Functionally, small GTPase required for proper localization of RNA polymerase II (RNAPII). May act at an RNAP assembly step prior to nuclear import. This is GPN-loop GTPase 3 from Homo sapiens (Human).